The primary structure comprises 129 residues: Glycine cleavage system H protein (129 aa).

Residues 24 to 106 (HAVVGITDFA…YDGGWLFKLA (83 aa)) form the Lipoyl-binding domain. Lysine 65 is modified (N6-lipoyllysine).

It belongs to the GcvH family. As to quaternary structure, the glycine cleavage system is composed of four proteins: P, T, L and H. It depends on (R)-lipoate as a cofactor.

In terms of biological role, the glycine cleavage system catalyzes the degradation of glycine. The H protein shuttles the methylamine group of glycine from the P protein to the T protein. This is Glycine cleavage system H protein from Hydrogenovibrio crunogenus (strain DSM 25203 / XCL-2) (Thiomicrospira crunogena).